An 860-amino-acid polypeptide reads, in one-letter code: Leucine--tRNA ligase (860 aa).

A 'HIGH' region motif is present at residues 42 to 52; that stretch reads PYPSGRLHMGH. Residues 619–623 carry the 'KMSKS' region motif; it reads KMSKS. Lysine 622 serves as a coordination point for ATP.

This sequence belongs to the class-I aminoacyl-tRNA synthetase family.

It localises to the cytoplasm. It carries out the reaction tRNA(Leu) + L-leucine + ATP = L-leucyl-tRNA(Leu) + AMP + diphosphate. This is Leucine--tRNA ligase from Histophilus somni (strain 2336) (Haemophilus somnus).